Here is a 171-residue protein sequence, read N- to C-terminus: N5-carboxyaminoimidazole ribonucleotide mutase (171 aa).

Residues serine 10, aspartate 13, and arginine 40 each coordinate substrate.

This sequence belongs to the AIR carboxylase family. Class I subfamily.

It catalyses the reaction 5-carboxyamino-1-(5-phospho-D-ribosyl)imidazole + H(+) = 5-amino-1-(5-phospho-D-ribosyl)imidazole-4-carboxylate. The protein operates within purine metabolism; IMP biosynthesis via de novo pathway; 5-amino-1-(5-phospho-D-ribosyl)imidazole-4-carboxylate from 5-amino-1-(5-phospho-D-ribosyl)imidazole (N5-CAIR route): step 2/2. In terms of biological role, catalyzes the conversion of N5-carboxyaminoimidazole ribonucleotide (N5-CAIR) to 4-carboxy-5-aminoimidazole ribonucleotide (CAIR). The sequence is that of N5-carboxyaminoimidazole ribonucleotide mutase from Thermotoga maritima (strain ATCC 43589 / DSM 3109 / JCM 10099 / NBRC 100826 / MSB8).